A 593-amino-acid polypeptide reads, in one-letter code: Autophagy-related protein 22-2 (593 aa).

Residues 42 to 62 (YGVAAEVFAVCGVGSFLPLTL) traverse the membrane as a helical segment. A glycan (N-linked (GlcNAc...) asparagine) is linked at Asn90. 3 helical membrane passes run 112–132 (SFAM…LVSF), 159–179 (LFML…VIGV), and 181–201 (CLGS…ANDP). A disordered region spans residues 228–261 (SWTDEEDTGDHAGPAGSKKAVEPEKASSSTSPEL). A run of 4 helical transmembrane segments spans residues 271 to 291 (GVGL…LLLF), 305 to 325 (LPLR…TVVC), 377 to 397 (VVVF…VSGT), and 415 to 435 (LLSI…PIVA). The N-linked (GlcNAc...) asparagine glycan is linked to Asn443. Helical transmembrane passes span 448–468 (LCIA…IPFI), 480–500 (WEIF…ASYC), 525–545 (KGSS…TGSV), and 548–568 (GFIF…LVNA).

It belongs to the ATG22 family.

It localises to the vacuole membrane. Its function is as follows. Vacuolar effluxer which mediate the efflux of amino acids resulting from autophagic degradation. The release of autophagic amino acids allows the maintenance of protein synthesis and viability during nitrogen starvation. In Emericella nidulans (strain FGSC A4 / ATCC 38163 / CBS 112.46 / NRRL 194 / M139) (Aspergillus nidulans), this protein is Autophagy-related protein 22-2 (atg22-2).